The sequence spans 546 residues: Thermolysin (546 aa).

The signal sequence occupies residues 1-25 (MDKRAMLGAIGLAFGLMAWPFGASA). Residues 26-228 (KEKSMVWNEQ…EAKPGGGQPV (203 aa)) constitute a propeptide, activation peptide. Positions 287, 289, 291, and 368 each coordinate Ca(2+). His372 lines the Zn(2+) pocket. The active site involves Glu373. Positions 376 and 396 each coordinate Zn(2+). Asn413, Asp415, Glu417, Glu420, Tyr423, Thr424, Ile427, and Asp430 together coordinate Ca(2+). The active-site Proton donor is His461.

This sequence belongs to the peptidase M4 family. It depends on Ca(2+) as a cofactor. The cofactor is Zn(2+).

The protein resides in the secreted. It catalyses the reaction Preferential cleavage: Xaa-|-Leu &gt; Xaa-|-Phe.. Its function is as follows. Extracellular zinc metalloprotease. Has collagenase activity. This Bacillus sp. (strain EA1) protein is Thermolysin (npr).